We begin with the raw amino-acid sequence, 133 residues long: Hydrogenase maturation factor HypA (133 aa).

His-2 contacts Ni(2+). The Zn(2+) site is built by Cys-73, Cys-75, Cys-105, and Cys-108.

Belongs to the HypA/HybF family.

Involved in the maturation of [NiFe] hydrogenases. Required for nickel insertion into the metal center of the hydrogenase. This is Hydrogenase maturation factor HypA from Methanosarcina acetivorans (strain ATCC 35395 / DSM 2834 / JCM 12185 / C2A).